Consider the following 287-residue polypeptide: Putative holocytochrome-c1 synthase (287 aa).

A compositionally biased stretch (polar residues) spans 1 to 12 (MRGFGSDSSQAS). 2 disordered regions span residues 1–63 (MRGF…QPSS) and 81–100 (QSQS…SAPL). Composition is skewed to low complexity over residues 31-63 (QARA…QPSS) and 81-92 (QSQSANSTQQAQ).

Belongs to the cytochrome c-type heme lyase family.

It is found in the mitochondrion inner membrane. The catalysed reaction is holo-[cytochrome c] = apo-[cytochrome c] + heme b. Its function is as follows. Probable lyase that catalyzes the covalent linking of the heme group to the cytochrome C apoprotein to produce the mature functional cytochrome. The chain is Putative holocytochrome-c1 synthase from Chaetomium thermophilum (strain DSM 1495 / CBS 144.50 / IMI 039719) (Thermochaetoides thermophila).